The sequence spans 387 residues: LL-diaminopimelate aminotransferase (387 aa).

2 residues coordinate substrate: Tyr-14 and Gly-39. Pyridoxal 5'-phosphate contacts are provided by residues Tyr-68, 102 to 103, Tyr-127, Asn-177, Tyr-208, and 236 to 238; these read SK and SLS. Positions 103, 127, and 177 each coordinate substrate. The residue at position 239 (Lys-239) is an N6-(pyridoxal phosphate)lysine. Arg-247 provides a ligand contact to pyridoxal 5'-phosphate. Position 365 (Arg-365) interacts with substrate.

This sequence belongs to the class-I pyridoxal-phosphate-dependent aminotransferase family. LL-diaminopimelate aminotransferase subfamily. As to quaternary structure, homodimer. Requires pyridoxal 5'-phosphate as cofactor.

The catalysed reaction is (2S,6S)-2,6-diaminopimelate + 2-oxoglutarate = (S)-2,3,4,5-tetrahydrodipicolinate + L-glutamate + H2O + H(+). It participates in amino-acid biosynthesis; L-lysine biosynthesis via DAP pathway; LL-2,6-diaminopimelate from (S)-tetrahydrodipicolinate (aminotransferase route): step 1/1. In terms of biological role, involved in the synthesis of meso-diaminopimelate (m-DAP or DL-DAP), required for both lysine and peptidoglycan biosynthesis. Catalyzes the direct conversion of tetrahydrodipicolinate to LL-diaminopimelate. The protein is LL-diaminopimelate aminotransferase of Aquifex aeolicus (strain VF5).